We begin with the raw amino-acid sequence, 250 residues long: Lymphotoxin-beta (250 aa).

The Cytoplasmic portion of the chain corresponds to Met1–Ala26. The helical; Signal-anchor for type II membrane protein transmembrane segment at Ala27–Met47 threads the bilayer. Topologically, residues Pro48–Gly250 are extracellular. Residues Pro87 to Val249 enclose the THD domain. An N-linked (GlcNAc...) asparagine glycan is attached at Asn228.

The protein belongs to the tumor necrosis factor family. As to quaternary structure, heterotrimer of either two LTB and one LTA subunits or (less prevalent) two LTA and one LTB subunits.

It localises to the membrane. Cytokine that binds to LTBR/TNFRSF3. May play a specific role in immune response regulation. Provides the membrane anchor for the attachment of the heterotrimeric complex to the cell surface. The protein is Lymphotoxin-beta (LTB) of Notamacropus eugenii (Tammar wallaby).